A 175-amino-acid chain; its full sequence is Ribulose bisphosphate carboxylase small subunit, chloroplastic (175 aa).

The N-terminal 46 residues, 1-46, are a transit peptide targeting the chloroplast; sequence MAPSVMASSATTVAPFQGLKSTAGMPVARRSGNSSFGNVSNGGRIR. An interaction with large subunit region spans residues 60 to 64; that stretch reads ETLSY.

Belongs to the RuBisCO small chain family. As to quaternary structure, heterohexadecamer of 8 large and 8 small subunits.

The protein resides in the plastid. The protein localises to the chloroplast. Its function is as follows. RuBisCO catalyzes two reactions: the carboxylation of D-ribulose 1,5-bisphosphate, the primary event in carbon dioxide fixation, as well as the oxidative fragmentation of the pentose substrate. Both reactions occur simultaneously and in competition at the same active site. Although the small subunit is not catalytic it is essential for maximal activity. The protein is Ribulose bisphosphate carboxylase small subunit, chloroplastic of Oryza sativa subsp. indica (Rice).